Reading from the N-terminus, the 591-residue chain is Zinc finger protein 48 (591 aa).

M1 carries the post-translational modification N-acetylmethionine. Disordered regions lie at residues M1–E24 and G55–D80. 2 stretches are compositionally biased toward basic and acidic residues: residues E8–E24 and G55–V65. Phosphoserine is present on S12. Residue K58 forms a Glycyl lysine isopeptide (Lys-Gly) (interchain with G-Cter in SUMO2) linkage. C2H2-type zinc fingers lie at residues A83–H105 and Y111–H133. The tract at residues R131–E160 is disordered. K150 participates in a covalent cross-link: Glycyl lysine isopeptide (Lys-Gly) (interchain with G-Cter in SUMO2). C2H2-type zinc fingers lie at residues T163–H185 and Y191–H213. Positions R206–A241 are disordered. Low complexity predominate over residues P224 to A235. Residue K240 forms a Glycyl lysine isopeptide (Lys-Gly) (interchain with G-Cter in SUMO2) linkage. C2H2-type zinc fingers lie at residues Y246–H268 and F274–H296. Residue K300 forms a Glycyl lysine isopeptide (Lys-Gly) (interchain with G-Cter in SUMO2) linkage. 2 C2H2-type zinc fingers span residues Y302–H324 and H330–H352. The disordered stretch occupies residues P372–G429. The segment covering T379 to E404 has biased composition (low complexity). The segment at H423–H445 adopts a C2H2-type 9 zinc-finger fold. Residue K449 forms a Glycyl lysine isopeptide (Lys-Gly) (interchain with G-Cter in SUMO2) linkage. The segment at Y451–H473 adopts a C2H2-type 10 zinc-finger fold. The disordered stretch occupies residues S464–P512. Residues P480–S496 are compositionally biased toward pro residues. 2 C2H2-type zinc fingers span residues H516–H538 and Y544–H566. Residues R564–E591 form a disordered region. Over residues P581–E591 the composition is skewed to basic and acidic residues. K583 participates in a covalent cross-link: Glycyl lysine isopeptide (Lys-Gly) (interchain with G-Cter in SUMO2).

It belongs to the krueppel C2H2-type zinc-finger protein family.

It localises to the nucleus. Functionally, may be involved in transcriptional regulation. The sequence is that of Zinc finger protein 48 (Znf48) from Mus musculus (Mouse).